The following is a 40-amino-acid chain: Natriuretic peptide PpNP-b (40 aa).

The propeptide occupies 1–8 (SGSKTANI). A disulfide bond links cysteine 12 and cysteine 28. The tract at residues 20–40 (IGTTSGMGCGRPRPKPTPGGS) is disordered.

The protein belongs to the natriuretic peptide family. Expressed by the venom gland.

It localises to the secreted. Functionally, snake venom natriuretic peptide that targets both NPR1 and NPR2. Exhibits hypotensive and vasodepressor activities. The sequence is that of Natriuretic peptide PpNP-b from Pseudechis porphyriacus (Red-bellied black snake).